The sequence spans 381 residues: tRNA-cytidine(32) 2-sulfurtransferase (381 aa).

The PP-loop motif motif lies at 101 to 106 (SGGKDS). 3 residues coordinate [4Fe-4S] cluster: Cys176, Cys179, and Cys267.

The protein belongs to the TtcA family. Homodimer. The cofactor is Mg(2+). [4Fe-4S] cluster serves as cofactor.

It is found in the cytoplasm. It carries out the reaction cytidine(32) in tRNA + S-sulfanyl-L-cysteinyl-[cysteine desulfurase] + AH2 + ATP = 2-thiocytidine(32) in tRNA + L-cysteinyl-[cysteine desulfurase] + A + AMP + diphosphate + H(+). It participates in tRNA modification. Catalyzes the ATP-dependent 2-thiolation of cytidine in position 32 of tRNA, to form 2-thiocytidine (s(2)C32). The sulfur atoms are provided by the cysteine/cysteine desulfurase (IscS) system. The polypeptide is tRNA-cytidine(32) 2-sulfurtransferase (Psychrobacter arcticus (strain DSM 17307 / VKM B-2377 / 273-4)).